We begin with the raw amino-acid sequence, 327 residues long: Aspartate--ammonia ligase (327 aa).

Belongs to the class-II aminoacyl-tRNA synthetase family. AsnA subfamily.

It localises to the cytoplasm. The catalysed reaction is L-aspartate + NH4(+) + ATP = L-asparagine + AMP + diphosphate + H(+). Its pathway is amino-acid biosynthesis; L-asparagine biosynthesis; L-asparagine from L-aspartate (ammonia route): step 1/1. In Bacillus mycoides (strain KBAB4) (Bacillus weihenstephanensis), this protein is Aspartate--ammonia ligase.